The chain runs to 368 residues: Polynucleotide 5'-hydroxyl-kinase NOL9 (368 aa).

Residue 36 to 43 (GPKNSGKS) coordinates ATP.

The protein belongs to the Clp1 family. NOL9/GRC3 subfamily.

It localises to the nucleus. It is found in the nucleolus. Polynucleotide 5'-kinase involved in rRNA processing. This chain is Polynucleotide 5'-hydroxyl-kinase NOL9, found in Arabidopsis thaliana (Mouse-ear cress).